A 452-amino-acid polypeptide reads, in one-letter code: MAKGEWKRSGADDLPLPGRSECEVFDDGTNTFFWRAHTVTVLFILTCALVYVTLLEETPHDTAYNTKRGIVASILVFLCFGVTQAKDGPFTRPHPAYWRFWLCVSVVYELFLIFILFQTVHDGRQFMKYIDPKLGVPLPERGYGGNCLIYDPGHPTDPFHNIWDKMDGFVPAHFLGWYIKTLMIRDWWMCMIISVMFEFLEYSLEHQLPNFSECWWDHWIMDVLVCNGLGIYCGMKTLGWLSMKPYQWQGLWNIPTYKGKIKRIAFQFTPYSWVKFEWRPASNLRRWLAVLGIIFMFLLAELNTFYLKFVMWMPPEHYLVLFRLVFFVNVGGVAMREIYDFMDDPKFHKKLGQQAWIVAAITVTEFLIVVKYDPNTIMLPIPFFITQCWILGIALILVWTLWRFFIRDITLRYKETRRRRQEVSSERDGSSSAPSGRSKLNGSMDSVRHRKS.

Residues 1–35 lie on the Cytoplasmic side of the membrane; sequence MAKGEWKRSGADDLPLPGRSECEVFDDGTNTFFWR. A helical transmembrane segment spans residues 36-56; it reads AHTVTVLFILTCALVYVTLLE. The Lumenal segment spans residues 57 to 69; that stretch reads ETPHDTAYNTKRG. The chain crosses the membrane as a helical span at residues 70–90; it reads IVASILVFLCFGVTQAKDGPF. At 91 to 99 the chain is on the cytoplasmic side; it reads TRPHPAYWR. A helical membrane pass occupies residues 100–120; it reads FWLCVSVVYELFLIFILFQTV. The Lumenal segment spans residues 121–286; the sequence is HDGRQFMKYI…EWRPASNLRR (166 aa). Residues 287-307 traverse the membrane as a helical segment; it reads WLAVLGIIFMFLLAELNTFYL. Position 308 (Lys308) is a topological domain, cytoplasmic. A helical transmembrane segment spans residues 309–329; it reads FVMWMPPEHYLVLFRLVFFVN. Residues 330 to 349 are Lumenal-facing; it reads VGGVAMREIYDFMDDPKFHK. The chain crosses the membrane as a helical span at residues 350–370; sequence KLGQQAWIVAAITVTEFLIVV. At 371–376 the chain is on the cytoplasmic side; sequence KYDPNT. Residues 377 to 397 form a helical membrane-spanning segment; sequence IMLPIPFFITQCWILGIALIL. Over 398-452 the chain is Lumenal; the sequence is VWTLWRFFIRDITLRYKETRRRRQEVSSERDGSSSAPSGRSKLNGSMDSVRHRKS. Residues 419–452 form a disordered region; it reads RRQEVSSERDGSSSAPSGRSKLNGSMDSVRHRKS. Positions 430–444 are enriched in polar residues; the sequence is SSSAPSGRSKLNGSM.

The protein belongs to the phosphatidyl serine synthase family.

The protein resides in the endoplasmic reticulum membrane. The enzyme catalyses a 1,2-diacyl-sn-glycero-3-phosphoethanolamine + L-serine = a 1,2-diacyl-sn-glycero-3-phospho-L-serine + ethanolamine. The catalysed reaction is 1-hexadecanoyl-2-(9Z-octadecenoyl)-sn-glycero-3-phosphoethanolamine + L-serine = 1-hexadecanoyl-2-(9Z-octadecenoyl)-sn-glycero-3-phospho-L-serine + ethanolamine. It carries out the reaction 1-hexadecanoyl-2-(4Z,7Z,10Z,13Z,16Z,19Z-docosahexaenoyl)-sn-glycero-3-phosphoethanolamine + L-serine = 1-hexadecanoyl-2-(4Z,7Z,10Z,13Z,16Z,19Z-docosahexaenoyl)-sn-glycero-3-phosphoserine + ethanolamine. It catalyses the reaction 1-octadecanoyl-2-(5Z,8Z,11Z,14Z)-eicosatetraenoyl-sn-glycero-3-phosphoethanolamine + L-serine = 1-octadecanoyl-2-(5Z,8Z,11Z,14Z)-eicosatetraenoyl-sn-glycero-3-phosphoserine + ethanolamine. The enzyme catalyses 1-octadecanoyl-2-(4Z,7Z,10Z,13Z,16Z,19Z-docosahexaenoyl)-sn-glycero-3-phosphoethanolamine + L-serine = 1-octadecanoyl-2-(4Z,7Z,10Z,13Z,16Z,19Z-docosahexaenoyl)-sn-glycero-3-phosphoserine + ethanolamine. The catalysed reaction is 1-(1Z-octadecenyl)-2-(4Z,7Z,10Z,13Z,16Z,19Z-docosahexaenoyl)-sn-glycero-3-phosphoethanolamine + L-serine = 1-(1Z-octadecenyl)-2-(4Z,7Z,10Z,13Z,16Z,19Z-docosahexaenoyl)-sn-glycero-3-phospho-L-serine + ethanolamine. It carries out the reaction 1-octadecanoyl-2-(9Z-octadecenoyl)-sn-glycero-3-phosphoethanolamine + L-serine = 1-octadecanoyl-2-(9Z-octadecenoyl)-sn-glycero-3-phospho-L-serine + ethanolamine. It catalyses the reaction 1-(1Z-octadecenyl)-2-(9Z-octadecenoyl)-sn-glycero-3-phosphoethanolamine + L-serine = 1-(1Z-octadecenyl)-2-(9Z-octadecenoyl)-sn-glycero-3-phospho-L-serine + ethanolamine. The enzyme catalyses 1-(1Z-octadecenyl)-2-(5Z,8Z,11Z,14Z- eicosatetraenoyl)-sn-glycero-3-phosphoethanolamine + L-serine = 1-(1Z-octadecenyl)-2-(5Z,8Z,11Z,14Z-eicosatetraenoyl)-sn-glycero-3-phospho-L-serine + ethanolamine. The protein operates within phospholipid metabolism; phosphatidylserine biosynthesis. Functionally, catalyzes a base-exchange reaction in which the polar head group of phosphatidylethanolamine (PE) or phosphatidylcholine (PC) is replaced by L-serine. Catalyzes the conversion of phosphatatidylethanolamine and does not act on phosphatidylcholine. Can utilize both phosphatidylethanolamine (PE) plasmalogen and diacyl PE as substrate and the latter is six times better utilized, indicating the importance of an ester linkage at the sn-1 position. Although it shows no sn-1 fatty acyl preference, exhibits significant preference towards docosahexaenoic acid (22:6n-3) compared with 18:1 or 20:4 at the sn-2 position. This is Phosphatidylserine synthase 2 (ptdss2) from Danio rerio (Zebrafish).